The sequence spans 496 residues: tRNA modification GTPase mss1, mitochondrial (496 aa).

The transit peptide at 1-19 (MRILNRVFLNTFQACFRRF) directs the protein to the mitochondrion. The 178-residue stretch at 239–416 (GINVAILGPS…FLQALSSTFE (178 aa)) folds into the TrmE-type G domain. Residues 246–253 (GPSNAGKS), 293–297 (DTAGL), and 363–366 (NKVD) each bind GTP.

It belongs to the TRAFAC class TrmE-Era-EngA-EngB-Septin-like GTPase superfamily. TrmE GTPase family.

It localises to the mitochondrion. In terms of biological role, GTPase involved in the 5-carboxymethylaminomethyl modification (mnm(5)s(2)U34) of the wobble uridine base in mitochondrial tRNAs. In Schizosaccharomyces pombe (strain 972 / ATCC 24843) (Fission yeast), this protein is tRNA modification GTPase mss1, mitochondrial (mss1).